A 357-amino-acid polypeptide reads, in one-letter code: UDP-N-acetylglucosamine--N-acetylmuramyl-(pentapeptide) pyrophosphoryl-undecaprenol N-acetylglucosamine transferase (357 aa).

Residues 13-15 (SAG), arginine 166, serine 197, and glutamine 292 each bind UDP-N-acetyl-alpha-D-glucosamine.

It belongs to the glycosyltransferase 28 family. MurG subfamily.

It localises to the cell membrane. The catalysed reaction is di-trans,octa-cis-undecaprenyl diphospho-N-acetyl-alpha-D-muramoyl-L-alanyl-D-glutamyl-meso-2,6-diaminopimeloyl-D-alanyl-D-alanine + UDP-N-acetyl-alpha-D-glucosamine = di-trans,octa-cis-undecaprenyl diphospho-[N-acetyl-alpha-D-glucosaminyl-(1-&gt;4)]-N-acetyl-alpha-D-muramoyl-L-alanyl-D-glutamyl-meso-2,6-diaminopimeloyl-D-alanyl-D-alanine + UDP + H(+). Its pathway is cell wall biogenesis; peptidoglycan biosynthesis. Cell wall formation. Catalyzes the transfer of a GlcNAc subunit on undecaprenyl-pyrophosphoryl-MurNAc-pentapeptide (lipid intermediate I) to form undecaprenyl-pyrophosphoryl-MurNAc-(pentapeptide)GlcNAc (lipid intermediate II). The polypeptide is UDP-N-acetylglucosamine--N-acetylmuramyl-(pentapeptide) pyrophosphoryl-undecaprenol N-acetylglucosamine transferase (Clostridium novyi (strain NT)).